A 282-amino-acid chain; its full sequence is Release factor glutamine methyltransferase (282 aa).

S-adenosyl-L-methionine contacts are provided by residues 129–133 (GTGSG), aspartate 151, phenylalanine 180, and asparagine 197. Position 197–200 (197–200 (NPPY)) interacts with substrate.

Belongs to the protein N5-glutamine methyltransferase family. PrmC subfamily. Monomer and homodimer.

It catalyses the reaction L-glutaminyl-[peptide chain release factor] + S-adenosyl-L-methionine = N(5)-methyl-L-glutaminyl-[peptide chain release factor] + S-adenosyl-L-homocysteine + H(+). In terms of biological role, methylates the class 1 translation termination release factors RF1/PrfA and RF2/PrfB on the glutamine residue of the universally conserved GGQ motif. In Thermotoga maritima (strain ATCC 43589 / DSM 3109 / JCM 10099 / NBRC 100826 / MSB8), this protein is Release factor glutamine methyltransferase (prmC).